The primary structure comprises 416 residues: Serine hydroxymethyltransferase (416 aa).

Residues L117 and 121–123 (GHL) contribute to the (6S)-5,6,7,8-tetrahydrofolate site. An N6-(pyridoxal phosphate)lysine modification is found at K226.

The protein belongs to the SHMT family. Homodimer. The cofactor is pyridoxal 5'-phosphate.

The protein resides in the cytoplasm. The enzyme catalyses (6R)-5,10-methylene-5,6,7,8-tetrahydrofolate + glycine + H2O = (6S)-5,6,7,8-tetrahydrofolate + L-serine. The protein operates within one-carbon metabolism; tetrahydrofolate interconversion. Its pathway is amino-acid biosynthesis; glycine biosynthesis; glycine from L-serine: step 1/1. Functionally, catalyzes the reversible interconversion of serine and glycine with tetrahydrofolate (THF) serving as the one-carbon carrier. This reaction serves as the major source of one-carbon groups required for the biosynthesis of purines, thymidylate, methionine, and other important biomolecules. Also exhibits THF-independent aldolase activity toward beta-hydroxyamino acids, producing glycine and aldehydes, via a retro-aldol mechanism. The protein is Serine hydroxymethyltransferase of Leptospira biflexa serovar Patoc (strain Patoc 1 / Ames).